The sequence spans 475 residues: MSPQTETKASVGFKAGVKDYKLTYYTPDYQTKDTDILAAFRVTPQPGVPPEEAGAAVAAESSTGTWRTVWTDGLTSLDRYKGRCYHIEPVAGEENQFIAYVAYPLDLFEEGSVTNMFTSIVGNVFGFKALRALRLEDLRIPTSYSKTFQGPPHGIQVERDKLNKYGRPLLGCTIKPKLGLSAKNYGRAVYECLRGGLDFTKDDENVNSQPFMRWRDRFLFCAEAIYKAQAETGEIKGHYLNATAGTCEEMIKRAVFARELGVPIVMHDYLTGGFTANTSLAHYCRDNGLLLHIHRAMHAVIDRQKNHGIHFRVLAKALRMSGGDHIHAGTVVGKLEGEREITLGFVDLLRDDYIEKDRSRGIYFTQDWVSLPGVLPVASGGIHVWHMPALTEIFGDDSVLQFGGGTLGHPWGNAPGAVANRVALEACVQARNEGRDLAREGNEIIREAAKWSPELAAACEVWKEIKFEFPAMDTL.

Residues 1-2 constitute a propeptide that is removed on maturation; the sequence is MS. Proline 3 is subject to N-acetylproline. Position 14 is an N6,N6,N6-trimethyllysine (lysine 14). Asparagine 123 and threonine 173 together coordinate substrate. Catalysis depends on lysine 175, which acts as the Proton acceptor. Lysine 177 serves as a coordination point for substrate. Mg(2+)-binding residues include lysine 201, aspartate 203, and glutamate 204. Lysine 201 carries the post-translational modification N6-carboxylysine. The Proton acceptor role is filled by histidine 294. Residues arginine 295, histidine 327, and serine 379 each coordinate substrate.

This sequence belongs to the RuBisCO large chain family. Type I subfamily. As to quaternary structure, heterohexadecamer of 8 large chains and 8 small chains; disulfide-linked. The disulfide link is formed within the large subunit homodimers. Mg(2+) is required as a cofactor. In terms of processing, the disulfide bond which can form in the large chain dimeric partners within the hexadecamer appears to be associated with oxidative stress and protein turnover.

The protein localises to the plastid. The protein resides in the chloroplast. It carries out the reaction 2 (2R)-3-phosphoglycerate + 2 H(+) = D-ribulose 1,5-bisphosphate + CO2 + H2O. The enzyme catalyses D-ribulose 1,5-bisphosphate + O2 = 2-phosphoglycolate + (2R)-3-phosphoglycerate + 2 H(+). Functionally, ruBisCO catalyzes two reactions: the carboxylation of D-ribulose 1,5-bisphosphate, the primary event in carbon dioxide fixation, as well as the oxidative fragmentation of the pentose substrate in the photorespiration process. Both reactions occur simultaneously and in competition at the same active site. The polypeptide is Ribulose bisphosphate carboxylase large chain (Castanea sativa (Sweet chestnut)).